The chain runs to 54 residues: Small ribosomal subunit protein uS14 (54 aa).

Cys-19, Cys-22, Cys-37, and Cys-40 together coordinate Zn(2+).

Belongs to the universal ribosomal protein uS14 family. Zinc-binding uS14 subfamily. Part of the 30S ribosomal subunit. Requires Zn(2+) as cofactor.

Its function is as follows. Binds 16S rRNA, required for the assembly of 30S particles. This is Small ribosomal subunit protein uS14 from Sulfurisphaera tokodaii (strain DSM 16993 / JCM 10545 / NBRC 100140 / 7) (Sulfolobus tokodaii).